The chain runs to 253 residues: 5-oxoprolinase subunit A (253 aa).

It belongs to the LamB/PxpA family. Forms a complex composed of PxpA, PxpB and PxpC.

The enzyme catalyses 5-oxo-L-proline + ATP + 2 H2O = L-glutamate + ADP + phosphate + H(+). In terms of biological role, catalyzes the cleavage of 5-oxoproline to form L-glutamate coupled to the hydrolysis of ATP to ADP and inorganic phosphate. This Bacillus cereus (strain ATCC 10987 / NRS 248) protein is 5-oxoprolinase subunit A.